Reading from the N-terminus, the 91-residue chain is Small ribosomal subunit protein uS19 (91 aa).

This sequence belongs to the universal ribosomal protein uS19 family.

In terms of biological role, protein S19 forms a complex with S13 that binds strongly to the 16S ribosomal RNA. The chain is Small ribosomal subunit protein uS19 from Colwellia psychrerythraea (strain 34H / ATCC BAA-681) (Vibrio psychroerythus).